The sequence spans 251 residues: 5'-nucleotidase SurE (251 aa).

Positions 8, 9, 40, and 95 each coordinate a divalent metal cation.

Belongs to the SurE nucleotidase family. A divalent metal cation is required as a cofactor.

The protein resides in the cytoplasm. It carries out the reaction a ribonucleoside 5'-phosphate + H2O = a ribonucleoside + phosphate. Its function is as follows. Nucleotidase that shows phosphatase activity on nucleoside 5'-monophosphates. The polypeptide is 5'-nucleotidase SurE (Maridesulfovibrio salexigens (strain ATCC 14822 / DSM 2638 / NCIMB 8403 / VKM B-1763) (Desulfovibrio salexigens)).